We begin with the raw amino-acid sequence, 420 residues long: Polyketide biosynthesis 3-hydroxy-3-methylglutaryl-ACP synthase PksG (420 aa).

Glutamate 82 serves as the catalytic Proton donor/acceptor. The active-site Acyl-thioester intermediate is the cysteine 114. Histidine 250 functions as the Proton donor/acceptor in the catalytic mechanism.

It belongs to the thiolase-like superfamily. HMG-CoA synthase family.

It is found in the cytoplasm. The enzyme catalyses 3-oxobutanoyl-[ACP] + acetyl-[ACP] + H2O = (3S)-hydroxy-3-methylglutaryl-[ACP] + holo-[ACP] + H(+). The protein operates within antibiotic biosynthesis; bacillaene biosynthesis. In terms of biological role, involved in some intermediate steps for the synthesis of the antibiotic polyketide bacillaene which is involved in secondary metabolism. It catalyzes the aldol condensation between the acetyl group attached to the acyl-carrier-protein AcpK (Ac-AcpK) and a beta-ketothioester polyketide intermediate linked to one of the consecutive thiolation domains of PksL. This chain is Polyketide biosynthesis 3-hydroxy-3-methylglutaryl-ACP synthase PksG (pksG), found in Bacillus subtilis (strain 168).